The sequence spans 623 residues: Leucine aminopeptidase 2 (623 aa).

A disordered region spans residues 1-23 (MRRCTKNSRSTNPPRDPNTLSNY). Residues 7 to 23 (NSRSTNPPRDPNTLSNY) are compositionally biased toward polar residues. Residues 145–147 (QCQ) and 277–282 (PYGGME) each bind a peptide. His306 is a Zn(2+) binding site. Glu307 serves as the catalytic Proton acceptor. Positions 310 and 329 each coordinate Zn(2+). Tyr394 functions as the Proton donor in the catalytic mechanism.

Belongs to the peptidase M1 family. The cofactor is Zn(2+).

Its subcellular location is the cytoplasm. The protein localises to the nucleus. It carries out the reaction an epoxide + H2O = an ethanediol. Its function is as follows. Aminopeptidase that preferentially cleaves di- and tripeptides. Also has low epoxide hydrolase activity (in vitro). Can hydrolyze the epoxide leukotriene LTA(4) but it forms preferentially 5,6-dihydroxy-7,9,11,14-eicosatetraenoic acid rather than the cytokine leukotriene B(4) as the product compared to the homologous mammalian enzyme (in vitro). This is Leucine aminopeptidase 2 from Ajellomyces capsulatus (strain NAm1 / WU24) (Darling's disease fungus).